Reading from the N-terminus, the 66-residue chain is Prokaryotic ubiquitin-like protein Pup (66 aa).

Residues 1–10 show a composition bias toward low complexity; the sequence is MAGQEQQSSS. Residues 1-39 are disordered; that stretch reads MAGQEQQSSSPREEEHEVADAPVPVPSSPQASAHTDGVD. The segment at 23 to 60 is ARC ATPase binding; the sequence is VPVPSSPQASAHTDGVDDLLDEIDGVLESNAEEFVRGF. Gln-66 carries the deamidated glutamine modification. Gln-66 participates in a covalent cross-link: Isoglutamyl lysine isopeptide (Gln-Lys) (interchain with K-? in acceptor proteins).

This sequence belongs to the prokaryotic ubiquitin-like protein family. In terms of assembly, strongly interacts with the proteasome-associated ATPase ARC through a hydrophobic interface; the interacting region of Pup lies in its C-terminal half. There is one Pup binding site per ARC hexamer ring. Post-translationally, is modified by deamidation of its C-terminal glutamine to glutamate by the deamidase Dop, a prerequisite to the subsequent pupylation process.

It participates in protein degradation; proteasomal Pup-dependent pathway. Functionally, protein modifier that is covalently attached to lysine residues of substrate proteins, thereby targeting them for proteasomal degradation. The tagging system is termed pupylation. This chain is Prokaryotic ubiquitin-like protein Pup, found in Renibacterium salmoninarum (strain ATCC 33209 / DSM 20767 / JCM 11484 / NBRC 15589 / NCIMB 2235).